Reading from the N-terminus, the 387-residue chain is MNFKRMTDLDLAGKRVLIREDLNVPVKDGKVTSDARIRASLPTIEHALKAGAKVMLMSHLGRPTEGEYAEEFSLQPVADHLGGLLGRDVPLVKDWLGGVEVADGQVVLCENVRFNQGEKKDDEALSQKMAALCDIYVMDAFGTAHRAQASTHGVGKFAPVACAGPLLANELDALGKALDAPAKPLVAIVGGSKVSTKLEVLESLSDKVDQLVVGGGIANTFLAAAGHPVGKSLYEKDLIPAAQKIAEKVHIPIPVDVVTAKAFSESAEAATKKVEDVADDDMILDVGPQTAHIVAALMKEAKTIIWNGPVGVFEFDQFGEGTREMALAIADSDAFSIAGGGDTLAAVDKYGITDKVSYISTGGGAFLEFVEGKVLPAVAMLEARAKD.

Substrate contacts are provided by residues 21-23, arginine 36, 59-62, arginine 113, and arginine 146; these read DLN and HLGR. ATP is bound by residues lysine 197, glutamate 314, and 340-343; that span reads GGDT.

It belongs to the phosphoglycerate kinase family. As to quaternary structure, monomer.

Its subcellular location is the cytoplasm. The enzyme catalyses (2R)-3-phosphoglycerate + ATP = (2R)-3-phospho-glyceroyl phosphate + ADP. It participates in carbohydrate degradation; glycolysis; pyruvate from D-glyceraldehyde 3-phosphate: step 2/5. In Alcanivorax borkumensis (strain ATCC 700651 / DSM 11573 / NCIMB 13689 / SK2), this protein is Phosphoglycerate kinase.